The primary structure comprises 1110 residues: MTDVDPHATRRDLVPNIPAELLEAGFDNVEEIGRGGFGVVYRCVQPSLDRAVAVKVLSTDLDRDNLERFLREQRAMGRLSGHPHIVTVLQVGVLAGGRPFIVMPYHAKNSLETLIRRHGPLDWRETLSIGVKLAGALEAAHRVGTLHRDVKPGNILLTDYGEPQLTDFGIARIAGGFETATGVIAGSPAFTAPEVLEGASPTPASDVYSLGATLFCVLTGHAAYERRSGERVIAQFLRITSQPIPDLRKQGLPADVAAAIERAMARHPADRPATAADVGEELRDVQRRNGVSVDEMPLPVELGVERRRSPEAHAAHRHTGGGTPTVPTPPTPATKYRPSVPTGSLVTRSRLTDILRAGGRRRLILIHAPSGFGKSTLAAQWREELSRDGAAVAWLTIDNDDNNEVWFLSHLLESIRRVRPTLAESLGHVLEEHGDDAGRYVLTSLIDEIHENDDRIAVVIDDWHRVSDSRTQAALGFLLDNGCHHLQLIVTSWSRAGLPVGRLRIGDELAEIDSAALRFDTDEAAALLNDAGGLRLPRADVQALTTSTDGWAAALRLAALSLRGGGDATQLLRGLSGASDVIHEFLSENVLDTLEPELREFLLVASVTERTCGGLASALAGITNGRAMLEEAEHRGLFLQRTEDDPNWFRFHQMFADFLHRRLERGGSHRVAELHRRASAWFAENGYLHEAVDHALAAGDPARAVDLVEQDETNLPEQSKMTTLLAIVQKLPTSMVVSRARLQLAIAWANILLQRPAPATGALNRFETALGRAELPEATQADLRAEADVLRAVAEVFADRVERVDDLLAEAMSRPDTLPPRVPGTAGNTAALAAICRFEFAEVYPLLDWAAPYQEMMGPFGTVYAQCLRGMAARNRLDIVAALQNFRTAFEVGTAVGAHSHAARLAGSLLAELLYETGDLAGAGRLMDESYLLGSEGGAVDYLAARYVIGARVKAAQGDHEGAADRLSTGGDTAVQLGLPRLAARINNERIRLGIALPAAVAADLLAPRTIPRDNGIATMTAELDEDSAVRLLSAGDSADRDQACQRAGALAAAIDGTRRPLAALQAQILHIETLAATGRESDARNELAPVATKCAELGLSRLLVDAGLA.

The Protein kinase domain occupies 26–283 (FDNVEEIGRG…TAADVGEELR (258 aa)). Residues 32–40 (IGRGGFGVV) and Lys-55 each bind ATP. Arg-148 functions as the Proton acceptor in the catalytic mechanism. Mg(2+) contacts are provided by Asn-154 and Asp-167. Residues 308 to 343 (RSPEAHAAHRHTGGGTPTVPTPPTPATKYRPSVPTG) form a disordered region.

It belongs to the protein kinase superfamily. Ser/Thr protein kinase family.

The enzyme catalyses L-seryl-[protein] + ATP = O-phospho-L-seryl-[protein] + ADP + H(+). It carries out the reaction L-threonyl-[protein] + ATP = O-phospho-L-threonyl-[protein] + ADP + H(+). The sequence is that of Serine/threonine-protein kinase PknK (pknK) from Mycobacterium bovis (strain ATCC BAA-935 / AF2122/97).